The primary structure comprises 163 residues: MDHSESLTFNQLTQDYINKLKDAFQMLDEDEDGLISRGDLTKIYATLGKTLTDEEWSKMVPDNDTSTAEVGEEGVSFPIFLSIMGKNLSQFPEREELEESLKAIGRGHDLNVPLNEVIDSLKEAGFENPEEEFAKLFKLFTTNQQATEERTFRGKLFLDSITD.

2 EF-hand domains span residues 15–50 (DYIN…LGKT) and 92–127 (PERE…AGFE). 4 residues coordinate Ca(2+): D28, D30, D32, and D39.

In terms of assembly, interacts with the IQ domain of MYO1.

It localises to the bud neck. Functionally, regulatory light chain for the class II conventional myosin MYO1. May play a role in the disassembly of the MYO1 ring at the bud neck at the end of its contraction during cytokinesis. This Saccharomyces cerevisiae (strain ATCC 204508 / S288c) (Baker's yeast) protein is Myosin light chain 2 (MLC2).